The following is a 174-amino-acid chain: Large ribosomal subunit protein uL10 (174 aa).

This sequence belongs to the universal ribosomal protein uL10 family. As to quaternary structure, part of the ribosomal stalk of the 50S ribosomal subunit. The N-terminus interacts with L11 and the large rRNA to form the base of the stalk. The C-terminus forms an elongated spine to which L12 dimers bind in a sequential fashion forming a multimeric L10(L12)X complex.

In terms of biological role, forms part of the ribosomal stalk, playing a central role in the interaction of the ribosome with GTP-bound translation factors. The protein is Large ribosomal subunit protein uL10 of Desulfovibrio desulfuricans (strain ATCC 27774 / DSM 6949 / MB).